Reading from the N-terminus, the 285-residue chain is Secreted RxLR effector protein 106 (285 aa).

A signal peptide spans 1 to 24; that stretch reads MSVRYAGLLLAAVAVSAHINEVNS. Residues 42-54 carry the RxLR-dEER motif; sequence RDLRSADNGNEER. Residues Asn-182 and Asn-187 are each glycosylated (N-linked (GlcNAc...) asparagine). Positions 220–229 are enriched in basic and acidic residues; it reads IEGDKEKKGG. Positions 220–262 are disordered; sequence IEGDKEKKGGPDYVEGTESRGKKRGQTEAPDLEPGLTPKQKRL. The Bipartite nuclear localization signal signature appears at 239-264; sequence RGKKRGQTEAPDLEPGLTPKQKRLKR.

The protein belongs to the RxLR effector family. In terms of assembly, interacts with host RCD1 and SRO1 transcription co-regulators.

It localises to the secreted. The protein localises to the host nucleus. Functionally, secreted effector that suppresses pathogen-associated molecular pattern (PAMP)-triggered immunity (PTI) in host plants. Binds to RCD1 and SRO1 transcription co-regulators to attenuate transcriptional activation of salicylic acid (SA)-induced defense genes and alters plant growth responses to light. Suppresses SA signal transduction but not SA levels. In Hyaloperonospora arabidopsidis (strain Emoy2) (Downy mildew agent), this protein is Secreted RxLR effector protein 106.